The following is a 107-amino-acid chain: Large ribosomal subunit protein uL24 (107 aa).

Belongs to the universal ribosomal protein uL24 family. In terms of assembly, part of the 50S ribosomal subunit.

Its function is as follows. One of two assembly initiator proteins, it binds directly to the 5'-end of the 23S rRNA, where it nucleates assembly of the 50S subunit. One of the proteins that surrounds the polypeptide exit tunnel on the outside of the subunit. The chain is Large ribosomal subunit protein uL24 from Nitratidesulfovibrio vulgaris (strain DSM 19637 / Miyazaki F) (Desulfovibrio vulgaris).